A 341-amino-acid polypeptide reads, in one-letter code: Geranylfarnesyl diphosphate synthase (341 aa).

Positions 47, 50, and 95 each coordinate isopentenyl diphosphate. Mg(2+) is bound by residues Asp-102 and Asp-106. Arg-111 serves as a coordination point for an all-trans-polyprenyl diphosphate. Arg-112 contributes to the isopentenyl diphosphate binding site. The an all-trans-polyprenyl diphosphate site is built by Lys-193, Thr-194, and Gln-231.

Belongs to the FPP/GGPP synthase family. As to quaternary structure, homodimer. It depends on Mg(2+) as a cofactor.

It is found in the cytoplasm. It carries out the reaction isopentenyl diphosphate + (2E,6E,10E)-geranylgeranyl diphosphate = (2E,6E,10E,14E)-geranylfarnesyl diphosphate + diphosphate. Probably involved in biosynthesis of the precursor for C25 (sesterterpanyl chain) moiety of C20-C25 diether (2-O-sesterterpanyl-3-O-phytanyl-sn-glycer) membrane lipid. Catalyzes the condensation of isopentenyl pyrophosphate with the allylic pyrophosphates to yield geranylfarnesyl diphosphate (GFPP). Geranylgeranyl diphosphate (GGPP) is the preferred substrate, but dimethylallyl diphosphate (DMAPP) and farnesyl diphosphate (FPP) can also be used as allylic substrate. This is Geranylfarnesyl diphosphate synthase (idsA3) from Natronomonas pharaonis (strain ATCC 35678 / DSM 2160 / CIP 103997 / JCM 8858 / NBRC 14720 / NCIMB 2260 / Gabara) (Halobacterium pharaonis).